The chain runs to 95 residues: Large ribosomal subunit protein uL23 (95 aa).

This sequence belongs to the universal ribosomal protein uL23 family. As to quaternary structure, part of the 50S ribosomal subunit. Contacts protein L29.

Functionally, binds to 23S rRNA. One of the proteins that surrounds the polypeptide exit tunnel on the outside of the ribosome. In Methanopyrus kandleri (strain AV19 / DSM 6324 / JCM 9639 / NBRC 100938), this protein is Large ribosomal subunit protein uL23.